Consider the following 90-residue polypeptide: Small ribosomal subunit protein uS17 (90 aa).

The protein belongs to the universal ribosomal protein uS17 family. In terms of assembly, part of the 30S ribosomal subunit.

Its function is as follows. One of the primary rRNA binding proteins, it binds specifically to the 5'-end of 16S ribosomal RNA. This is Small ribosomal subunit protein uS17 from Gluconobacter oxydans (strain 621H) (Gluconobacter suboxydans).